Reading from the N-terminus, the 245-residue chain is OCIA domain-containing protein 1 (245 aa).

One can recognise an OCIA domain in the interval 1 to 112 (MNGRADFREP…KKLENSPLGE (112 aa)). 4 positions are modified to phosphoserine: Ser108, Ser116, Ser123, and Ser191. 2 disordered regions span residues 111–141 (GEAL…VSGQ) and 169–245 (NESA…TWDE). 2 stretches are compositionally biased toward basic and acidic residues: residues 190-210 (ESPK…RESY) and 224-238 (PMHE…KVNK).

Belongs to the OCIAD1 family. Interacts with OCIAD2. Interacts with STAT3. As to expression, isoform 1 is highly expressed in many tissues, including testis, brain, placenta, ovary, prostate and mammary gland. Isoform 2 expression is restricted to the central nervous system including brain, cerebellum and spinal cord.

Its subcellular location is the endosome. Functionally, maintains stem cell potency. Increases STAT3 phosphorylation and controls ERK phosphorylation. May act as a scaffold, increasing STAT3 recruitment onto endosomes. Involved in integrin-mediated cancer cell adhesion and colony formation in ovarian cancer. This chain is OCIA domain-containing protein 1, found in Homo sapiens (Human).